The sequence spans 188 residues: MESRFTRGKSPLLERPLGRPRGEVSLSAFALLFCELVQYCQRRVYSVAELQSKLAQLGHQVGLRLLDPLVSRERGGRRETKVLSVLLFVKGPVWRALFGKEADKLEQANDDDKTYYVIEREPLVNTFISVPRENSTLNCAAFTAGLVEAVLGASGFPAKVTAHWHKGTTLMIKFEEGVIARDKSLEGR.

The protein belongs to the TRAPP small subunits family. BET3 subfamily. Part of the multisubunit TRAPP (transport protein particle) complex.

Its subcellular location is the golgi apparatus. It localises to the cis-Golgi network. It is found in the endoplasmic reticulum. In terms of biological role, may play a role in vesicular transport from endoplasmic reticulum to Golgi. The polypeptide is Trafficking protein particle complex subunit 5 (TRAPPC5) (Gallus gallus (Chicken)).